The chain runs to 355 residues: Chorismate synthase (355 aa).

The NADP(+) site is built by R44 and R49. Residues 121–123, G277, 292–296, and R319 contribute to the FMN site; these read HFS and KPTPS.

The protein belongs to the chorismate synthase family. The cofactor is FMNH2.

It carries out the reaction 5-O-(1-carboxyvinyl)-3-phosphoshikimate = chorismate + phosphate. Its pathway is metabolic intermediate biosynthesis; chorismate biosynthesis; chorismate from D-erythrose 4-phosphate and phosphoenolpyruvate: step 7/7. Catalyzes the anti-1,4-elimination of the C-3 phosphate and the C-6 proR hydrogen from 5-enolpyruvylshikimate-3-phosphate (EPSP) to yield chorismate, which is the branch point compound that serves as the starting substrate for the three terminal pathways of aromatic amino acid biosynthesis. This reaction introduces a second double bond into the aromatic ring system. In Thermococcus kodakarensis (strain ATCC BAA-918 / JCM 12380 / KOD1) (Pyrococcus kodakaraensis (strain KOD1)), this protein is Chorismate synthase.